Consider the following 439-residue polypeptide: uncharacterized protein (439 aa).

Residues 268–284 are compositionally biased toward low complexity; that stretch reads QQQQQQQPQHNNNNTQV. Residues 268 to 439 form a disordered region; the sequence is QQQQQQQPQH…RTRFTTTNLH (172 aa). Pro residues predominate over residues 285–328; that stretch reads QPPPPSQQLPPPPKPQPQLPKPQPQKPQPQLPKPPQQPKPPQEP. The span at 350–439 shows a compositional bias: low complexity; the sequence is QEQQQQPPQE…RTRFTTTNLH (90 aa).

This is an uncharacterized protein from Dictyostelium discoideum (Social amoeba).